Reading from the N-terminus, the 180-residue chain is Inosine/xanthosine triphosphatase (180 aa).

Residue 8–13 participates in substrate binding; that stretch reads TTNPAK. 2 residues coordinate Mg(2+): D38 and E68. 68 to 69 is a substrate binding site; sequence EA.

The protein belongs to the YjjX NTPase family. As to quaternary structure, homodimer. The cofactor is Mg(2+). Mn(2+) is required as a cofactor.

It carries out the reaction XTP + H2O = XDP + phosphate + H(+). The enzyme catalyses ITP + H2O = IDP + phosphate + H(+). Phosphatase that hydrolyzes non-canonical purine nucleotides such as XTP and ITP to their respective diphosphate derivatives. Probably excludes non-canonical purines from DNA/RNA precursor pool, thus preventing their incorporation into DNA/RNA and avoiding chromosomal lesions. This Yersinia pestis bv. Antiqua (strain Antiqua) protein is Inosine/xanthosine triphosphatase.